A 695-amino-acid polypeptide reads, in one-letter code: Follicle-stimulating hormone receptor (695 aa).

Positions 1–17 (MALLLVSLLAFLSLGSG) are cleaved as a signal peptide. Intrachain disulfides connect Cys18–Cys25 and Cys23–Cys32. One can recognise an LRRNT domain in the interval 18–46 (CHHRICHCSNRVFLCQESKVTEIPSDLPR). Over 18 to 366 (CHHRICHCSN…EDIMGYNILR (349 aa)) the chain is Extracellular. 9 LRR repeats span residues 49–72 (IELR…FGDL), 73–97 (EKIE…LPKL), 98–118 (HEIR…AFQN), 119–143 (LPNL…KIHS), 144–169 (LQKV…VGLS), 170–192 (FESV…AFNG), 193–216 (TQLD…VFHG), 217–240 (ASGP…GLEN), and 241–259 (LKKL…PTLE). Asn191 and Asn199 each carry an N-linked (GlcNAc...) asparagine glycan. Cystine bridges form between Cys275–Cys346, Cys276–Cys292, Cys276–Cys356, and Cys292–Cys338. N-linked (GlcNAc...) asparagine glycans are attached at residues Asn293 and Asn318. Sulfotyrosine is present on Tyr335. A helical membrane pass occupies residues 367 to 387 (VLIWFISILAITGNIIVLVIL). Residues 388-398 (TTSQYKLTVPR) lie on the Cytoplasmic side of the membrane. Residues 399 to 421 (FLMCNLAFADLCIGIYLLLIASV) form a helical membrane-spanning segment. Residues 422–443 (DIHTKSQYHNYAIDWQTGAGCD) lie on the Extracellular side of the membrane. Cysteines 442 and 517 form a disulfide. The helical transmembrane segment at 444–465 (AAGFFTVFASELSVYTLTAITL) threads the bilayer. The Cytoplasmic portion of the chain corresponds to 466-485 (ERWHTITHAMQLDCKVQLRH). The helical transmembrane segment at 486–508 (AASVMVMGWIFAFAAALFPIFGI) threads the bilayer. The Extracellular portion of the chain corresponds to 509-528 (SSYMKVSICLPMDIDSPLSQ). The helical transmembrane segment at 529–550 (LYVMSLLVLNVLAFVVICGCYI) threads the bilayer. Residues 551 to 573 (HIYLTVRNPNIVSSSSDTRIAKR) are Cytoplasmic-facing. The helical transmembrane segment at 574 to 597 (MAMLIFTDFLCMAPISFFAISASL) threads the bilayer. The Extracellular portion of the chain corresponds to 598-608 (KVPLITVSKAK). The chain crosses the membrane as a helical span at residues 609–630 (ILLVLFHPINSCANPFLYAIFT). Over 631–695 (KNFRRDFFIL…LVPLSHLAQN (65 aa)) the chain is Cytoplasmic.

It belongs to the G-protein coupled receptor 1 family. FSH/LSH/TSH subfamily. In terms of assembly, homotrimer. Functions as a homotrimer binding the FSH hormone heterodimer composed of CGA and FSHB. Interacts with ARRB2. Interacts with APPL2; interaction is independent of follicle stimulating hormone stimulation. Sulfated. Post-translationally, N-glycosylated; indirectly required for FSH-binding, possibly via a conformational change that allows high affinity binding of hormone. Sertoli cells and ovarian granulosa cells.

Its subcellular location is the cell membrane. Functionally, g protein-coupled receptor for follitropin, the follicle-stimulating hormone. Through cAMP production activates the downstream PI3K-AKT and ERK1/ERK2 signaling pathways. The chain is Follicle-stimulating hormone receptor (FSHR) from Homo sapiens (Human).